A 248-amino-acid chain; its full sequence is UPF0246 protein RC0754 (248 aa).

This sequence belongs to the UPF0246 family.

This Rickettsia conorii (strain ATCC VR-613 / Malish 7) protein is UPF0246 protein RC0754.